Here is a 172-residue protein sequence, read N- to C-terminus: ATP synthase subunit b (172 aa).

The helical transmembrane segment at 12–32 (VGFNAGTMLFQLVAMLILLAL) threads the bilayer.

It belongs to the ATPase B chain family. As to quaternary structure, F-type ATPases have 2 components, F(1) - the catalytic core - and F(0) - the membrane proton channel. F(1) has five subunits: alpha(3), beta(3), gamma(1), delta(1), epsilon(1). F(0) has three main subunits: a(1), b(2) and c(10-14). The alpha and beta chains form an alternating ring which encloses part of the gamma chain. F(1) is attached to F(0) by a central stalk formed by the gamma and epsilon chains, while a peripheral stalk is formed by the delta and b chains.

The protein localises to the cell membrane. Its function is as follows. F(1)F(0) ATP synthase produces ATP from ADP in the presence of a proton or sodium gradient. F-type ATPases consist of two structural domains, F(1) containing the extramembraneous catalytic core and F(0) containing the membrane proton channel, linked together by a central stalk and a peripheral stalk. During catalysis, ATP synthesis in the catalytic domain of F(1) is coupled via a rotary mechanism of the central stalk subunits to proton translocation. In terms of biological role, component of the F(0) channel, it forms part of the peripheral stalk, linking F(1) to F(0). This Bacillus licheniformis (strain ATCC 14580 / DSM 13 / JCM 2505 / CCUG 7422 / NBRC 12200 / NCIMB 9375 / NCTC 10341 / NRRL NRS-1264 / Gibson 46) protein is ATP synthase subunit b.